The sequence spans 448 residues: UDP-N-acetylglucosamine--dolichyl-phosphate N-acetylglucosaminephosphotransferase (448 aa).

A helical membrane pass occupies residues 24–44 (ALVAAVGFGIAGYLATDMLIP). UDP-N-acetyl-alpha-D-glucosamine-binding positions include 58–60 (KDL) and Glu70. The next 2 membrane-spanning stretches (helical) occupy residues 72–92 (IGAI…PFIF) and 129–149 (YLSA…DDLF). Residue Lys156 participates in dolichyl phosphate binding. 2 helical membrane-spanning segments follow: residues 157–177 (FFLP…DFGV) and 202–222 (YVYM…LAGV). 210 to 218 (IFCPNSINI) contributes to the dolichyl phosphate binding site. Asn217 contributes to the Mg(2+) binding site. Position 223 (Asn223) interacts with UDP-N-acetyl-alpha-D-glucosamine. The next 4 helical transmembrane spans lie at 231-251 (IVLA…GPLA), 256-276 (HRFS…LWKW), 283-303 (VFVG…VGIL), and 309-329 (TMLL…PQLF). Asp287 is a binding site for Mg(2+). A UDP-N-acetyl-alpha-D-glucosamine-binding site is contributed by 336-338 (RHR). 2 helical membrane-spanning segments follow: residues 387 to 407 (EIIS…FGPM) and 419 to 439 (LQFC…AIIF).

The protein belongs to the glycosyltransferase 4 family. It depends on Mg(2+) as a cofactor.

The protein localises to the endoplasmic reticulum membrane. The enzyme catalyses a di-trans,poly-cis-dolichyl phosphate + UDP-N-acetyl-alpha-D-glucosamine = an N-acetyl-alpha-D-glucosaminyl-diphospho-di-trans,poly-cis-dolichol + UMP. It participates in protein modification; protein glycosylation. Inhibited by natural nucleoside antibiotic tunicamycin, which acts as a structural analog and competitor of UDP-GlcNAc. UDP-N-acetylglucosamine--dolichyl-phosphate N-acetylglucosaminephosphotransferase that operates in the biosynthetic pathway of dolichol-linked oligosaccharides, the glycan precursors employed in protein asparagine (N)-glycosylation. The assembly of dolichol-linked oligosaccharides begins on the cytosolic side of the endoplasmic reticulum membrane and finishes in its lumen. The sequential addition of sugars to dolichol pyrophosphate produces dolichol-linked oligosaccharides containing fourteen sugars, including two GlcNAcs, nine mannoses and three glucoses. Once assembled, the oligosaccharide is transferred from the lipid to nascent proteins by oligosaccharyltransferases. Catalyzes the initial step of dolichol-linked oligosaccharide biosynthesis, transfering GlcNAc-1-P from cytosolic UDP-GlcNAc onto the carrier lipid dolichyl phosphate (P-dolichol), yielding GlcNAc-P-P-dolichol embedded in the cytoplasmic leaflet of the endoplasmic reticulum membrane. The protein is UDP-N-acetylglucosamine--dolichyl-phosphate N-acetylglucosaminephosphotransferase (ALG7) of Saccharomyces cerevisiae (strain ATCC 204508 / S288c) (Baker's yeast).